The sequence spans 136 residues: Histone H3.2 (136 aa).

The tract at residues 1–43 is disordered; the sequence is MARTKQTARKSTGGKAPRKQLATKAARKSAPATGGVKKPHRFR. Residues K5 and K10 each carry the N6,N6,N6-trimethyllysine; alternate modification. N6,N6-dimethyllysine; alternate occurs at positions 5 and 10. 2 positions are modified to N6-methyllysine; alternate: K5 and K10. The residue at position 10 (K10) is an N6-acetyllysine; alternate. The residue at position 11 (S11) is a Phosphoserine. At T12 the chain carries Phosphothreonine. The residue at position 15 (K15) is an N6-acetyllysine. Residues K19, K24, and K28 each carry the N6-methyllysine; alternate modification. Residues K19 and K24 each carry the N6-acetyllysine; alternate modification. The residue at position 28 (K28) is an N6,N6,N6-trimethyllysine; alternate. The residue at position 28 (K28) is an N6,N6-dimethyllysine; alternate. S29 is modified (phosphoserine). The residue at position 37 (K37) is an N6,N6,N6-trimethyllysine; alternate. K37 carries the post-translational modification N6,N6-dimethyllysine; alternate. K37 bears the N6-methyllysine; alternate mark.

The protein belongs to the histone H3 family. As to quaternary structure, the nucleosome is a histone octamer containing two molecules each of H2A, H2B, H3 and H4 assembled in one H3-H4 heterotetramer and two H2A-H2B heterodimers. The octamer wraps approximately 147 bp of DNA. Post-translationally, acetylation is generally linked to gene activation. Can be acetylated to form H3K9ac, H3K14ac, H3K18ac and H3K23ac. H3K9ac could compete with H3K9me and prevent gene silencing. H3K9ac is restricted to euchromatin. In terms of processing, methylated to form mainly H3K4me, H3K9me, H3K18me, H3K23me, H3K27me and H3K36me. H3K4me1/2/3, H3K9me3, H3K27me3 and H3K36me1/2/3 are typical marks for euchromatin, whereas heterochromatic chromocenters are enriched in H3K9me1/2 and H3K27me1/2. H2BK143ub1 is probably prerequisite for H3K4me. Can be phosphorylated to form H3S10ph, H3T11ph and H3S28ph.

It localises to the nucleus. The protein resides in the chromosome. Its function is as follows. Core component of nucleosome. Nucleosomes wrap and compact DNA into chromatin, limiting DNA accessibility to the cellular machineries which require DNA as a template. Histones thereby play a central role in transcription regulation, DNA repair, DNA replication and chromosomal stability. DNA accessibility is regulated via a complex set of post-translational modifications of histones, also called histone code, and nucleosome remodeling. The polypeptide is Histone H3.2 (Brassica napus (Rape)).